Here is a 956-residue protein sequence, read N- to C-terminus: Calsyntenin-3 (956 aa).

An N-terminal signal peptide occupies residues 1-20 (MARMSFLSFLLFCLTSVAHG). The Extracellular portion of the chain corresponds to 21-850 (NKANKHKPWI…PHRNSVVPGA (830 aa)). Cadherin domains follow at residues 30–151 (IETE…SPVF) and 152–271 (VERR…IPLF). N-linked (GlcNAc...) asparagine glycans are attached at residues Asn333, Asn353, Asn513, and Asn743. The chain crosses the membrane as a helical span at residues 851-871 (ATVIIMVCVGFLVVMVILGVF). Residues 872–956 (RIRSIHRRGE…EGRDSAPRRY (85 aa)) lie on the Cytoplasmic side of the membrane. A compositionally biased stretch (acidic residues) spans 921–937 (GECEDEEEVVDSPDDTS). Residues 921–956 (GECEDEEEVVDSPDDTSDDQRIIIKKEGRDSAPRRY) form a disordered region. Basic and acidic residues predominate over residues 938–956 (DDQRIIIKKEGRDSAPRRY).

The protein belongs to the calsyntenin family. As to quaternary structure, homooligomer and heterooligomer; mediates both homophilic and heterophilc interactions with clstn1 and clstn2 paralogs via cadherin domains. Interacts (via cadherin domains) with both alpha and beta isoforms of neurexins. In terms of tissue distribution, by 48 hours post-fertilization (hpf), widely expressed in the brain, with strong expression in the telencephalon and the midbrain. Not expressed in the optic tectum.

It is found in the postsynaptic cell membrane. It localises to the endoplasmic reticulum membrane. The protein resides in the golgi apparatus membrane. Synaptic adhesion molecule. Promotes synapse development by acting as a cell adhesion molecule at the postsynaptic membrane, which associates with presynaptic neurexins. This Danio rerio (Zebrafish) protein is Calsyntenin-3.